The chain runs to 288 residues: Lysosomal thioesterase PPT2-B (288 aa).

Positions 1 to 20 (MRGYLLLLPLLLCLVDNSVS) are cleaved as a signal peptide. A disulfide bond links Cys95 and Cys103. Catalysis depends on Ser97, which acts as the Nucleophile. Residue Asn143 is glycosylated (N-linked (GlcNAc...) asparagine). The cysteines at positions 151 and 162 are disulfide-linked. Asn192 carries an N-linked (GlcNAc...) asparagine glycan. Residues Asp214 and His269 contribute to the active site. Asn275 carries N-linked (GlcNAc...) asparagine glycosylation.

The protein belongs to the palmitoyl-protein thioesterase family.

The protein localises to the lysosome. The enzyme catalyses hexadecanoyl-CoA + H2O = hexadecanoate + CoA + H(+). It catalyses the reaction S-hexadecanoyl-N-acetylcysteamine + H2O = N-acetylcysteamine + hexadecanoate + H(+). Its function is as follows. Catalyzes the cleavage of thioester bonds from S-palmitoyl-CoA or S-palmitoyl-N-acetylcysteamine (unbranched structures) but does not have activity against palmitoylcysteine or palmitoylated proteins, branched structures or bulky head groups. Conversely, hydrolyzes both long and short chain fatty acyl-CoA substrate. This is Lysosomal thioesterase PPT2-B (ppt2-b) from Xenopus laevis (African clawed frog).